The chain runs to 76 residues: CLAVATA3/ESR (CLE)-related protein 46 (76 aa).

Positions 1–26 (MRRHDIIIKLLLLMCLLLSRFVTREC) are cleaved as a signal peptide. Positions 53-76 (EEKKWHKHPSGPNPTGNRHPPVKH) are disordered. Hydroxyproline occurs at positions 61 and 64. O-linked (Ara...) hydroxyproline glycosylation is present at Pro64.

The protein belongs to the CLV3/ESR signal peptide family. Post-translationally, the O-glycosylation (arabinosylation) of the hydroxyproline Pro-64 enhances binding affinity of the CLE46p peptide for its receptor.

The protein localises to the secreted. It localises to the extracellular space. Functionally, extracellular signal peptide that regulates cell fate. The protein is CLAVATA3/ESR (CLE)-related protein 46 of Arabidopsis thaliana (Mouse-ear cress).